Reading from the N-terminus, the 323-residue chain is Methionyl-tRNA formyltransferase (323 aa).

113–116 (SLLP) provides a ligand contact to (6S)-5,6,7,8-tetrahydrofolate.

This sequence belongs to the Fmt family.

The enzyme catalyses L-methionyl-tRNA(fMet) + (6R)-10-formyltetrahydrofolate = N-formyl-L-methionyl-tRNA(fMet) + (6S)-5,6,7,8-tetrahydrofolate + H(+). Its function is as follows. Attaches a formyl group to the free amino group of methionyl-tRNA(fMet). The formyl group appears to play a dual role in the initiator identity of N-formylmethionyl-tRNA by promoting its recognition by IF2 and preventing the misappropriation of this tRNA by the elongation apparatus. This chain is Methionyl-tRNA formyltransferase, found in Nitrosococcus oceani (strain ATCC 19707 / BCRC 17464 / JCM 30415 / NCIMB 11848 / C-107).